The sequence spans 657 residues: Threonine--tRNA ligase (657 aa).

The region spanning 7-70 is the TGS domain; it reads ILAVIALTLP…TADAAIEIIT (64 aa). Residues 253–555 form a catalytic region; the sequence is DHRKLGAELE…LIEHTAGNFP (303 aa). Residues cysteine 351, histidine 402, and histidine 532 each coordinate Zn(2+).

This sequence belongs to the class-II aminoacyl-tRNA synthetase family. Homodimer. Zn(2+) serves as cofactor.

Its subcellular location is the cytoplasm. The catalysed reaction is tRNA(Thr) + L-threonine + ATP = L-threonyl-tRNA(Thr) + AMP + diphosphate + H(+). Functionally, catalyzes the attachment of threonine to tRNA(Thr) in a two-step reaction: L-threonine is first activated by ATP to form Thr-AMP and then transferred to the acceptor end of tRNA(Thr). Also edits incorrectly charged L-seryl-tRNA(Thr). This Pelodictyon phaeoclathratiforme (strain DSM 5477 / BU-1) protein is Threonine--tRNA ligase.